We begin with the raw amino-acid sequence, 240 residues long: Uridylate kinase (240 aa).

12–15 (KISG) contacts ATP. The segment at 20 to 25 (GNQGFG) is involved in allosteric activation by GTP. Position 54 (Gly54) interacts with UMP. ATP contacts are provided by Gly55 and Arg59. Residues Asp74 and 135–142 (TGNPYFST) each bind UMP. 2 residues coordinate ATP: Tyr168 and Asp171.

This sequence belongs to the UMP kinase family. Homohexamer.

It localises to the cytoplasm. The enzyme catalyses UMP + ATP = UDP + ADP. It functions in the pathway pyrimidine metabolism; CTP biosynthesis via de novo pathway; UDP from UMP (UMPK route): step 1/1. Its activity is regulated as follows. Allosterically activated by GTP. Inhibited by UTP. Functionally, catalyzes the reversible phosphorylation of UMP to UDP. The protein is Uridylate kinase of Moorella thermoacetica (strain ATCC 39073 / JCM 9320).